Here is a 192-residue protein sequence, read N- to C-terminus: Thymidine kinase (192 aa).

Residues Ser-9 to Thr-16 and Asp-88 to His-91 contribute to the ATP site. Residue Glu-89 is the Proton acceptor of the active site. 4 residues coordinate Zn(2+): Cys-146, Cys-148, Cys-183, and His-186.

It belongs to the thymidine kinase family. As to quaternary structure, homotetramer.

The protein resides in the cytoplasm. It carries out the reaction thymidine + ATP = dTMP + ADP + H(+). The protein is Thymidine kinase of Blochmanniella floridana.